The primary structure comprises 336 residues: PHD finger protein 11 (336 aa).

A disordered region spans residues 1–20; that stretch reads MAEETAPPCGPVSTGGSLSP. A C2HC pre-PHD-type zinc finger spans residues 25 to 61; sequence KRTCALCPDGHEWSVIYFAPSANIAAHENCLLYSSGL. The PHD-type zinc finger occupies 91 to 143; it reads LKCSLCNKGGATVGCDLSSCRKSYHYVCAKKDHAIPQVDEDLGTYKIFCPEHP. 2 disordered regions span residues 139-179 and 303-336; these read CPEH…KKMK and DPSG…GDSL. Over residues 303–314 the composition is skewed to low complexity; the sequence is DPSGSTSGSLLP.

Interacts with BRCA1 and RELA.

Its subcellular location is the nucleus. Functionally, positive regulator of Th1-type cytokine gene expression. The polypeptide is PHD finger protein 11 (Phf11) (Rattus norvegicus (Rat)).